The chain runs to 109 residues: B melanoma antigen 2 (109 aa).

Residues 1 to 17 form the signal peptide; it reads MAAGVVFLALSAQLLQA.

It belongs to the BAGE family. In terms of tissue distribution, not expressed in normal tissues except in testis. Expressed in 22% of melanomas, in bladder and lung carcinomas.

Its subcellular location is the secreted. Functionally, unknown. Candidate gene encoding tumor antigens. In Homo sapiens (Human), this protein is B melanoma antigen 2 (BAGE2).